A 319-amino-acid polypeptide reads, in one-letter code: ATP-dependent 6-phosphofructokinase (319 aa).

Position 11 (Gly11) interacts with ATP. Residue 21 to 25 (RAVVR) participates in ADP binding. ATP is bound by residues 72–73 (RY) and 102–105 (GDGS). Asp103 is a Mg(2+) binding site. A substrate-binding site is contributed by 125-127 (TID). Asp127 (proton acceptor) is an active-site residue. Arg154 is an ADP binding site. Substrate is bound by residues Arg162 and 169-171 (MGR). ADP is bound by residues 185 to 187 (GAE), Arg211, and 213 to 215 (KKH). Substrate-binding positions include Glu222, Arg243, and 249-252 (HVQR).

Belongs to the phosphofructokinase type A (PFKA) family. ATP-dependent PFK group I subfamily. Prokaryotic clade 'B1' sub-subfamily. Homotetramer. Mg(2+) is required as a cofactor.

It is found in the cytoplasm. It catalyses the reaction beta-D-fructose 6-phosphate + ATP = beta-D-fructose 1,6-bisphosphate + ADP + H(+). It participates in carbohydrate degradation; glycolysis; D-glyceraldehyde 3-phosphate and glycerone phosphate from D-glucose: step 3/4. With respect to regulation, allosterically activated by ADP and other diphosphonucleosides, and allosterically inhibited by phosphoenolpyruvate. Its function is as follows. Catalyzes the phosphorylation of D-fructose 6-phosphate to fructose 1,6-bisphosphate by ATP, the first committing step of glycolysis. The polypeptide is ATP-dependent 6-phosphofructokinase (Listeria monocytogenes serotype 4a (strain HCC23)).